The primary structure comprises 274 residues: 2,3,4,5-tetrahydropyridine-2,6-dicarboxylate N-succinyltransferase (274 aa).

The substrate site is built by Arg-104 and Asp-141.

Belongs to the transferase hexapeptide repeat family. Homotrimer.

The protein localises to the cytoplasm. The enzyme catalyses (S)-2,3,4,5-tetrahydrodipicolinate + succinyl-CoA + H2O = (S)-2-succinylamino-6-oxoheptanedioate + CoA. It functions in the pathway amino-acid biosynthesis; L-lysine biosynthesis via DAP pathway; LL-2,6-diaminopimelate from (S)-tetrahydrodipicolinate (succinylase route): step 1/3. With respect to regulation, inhibited by p-(chloromercuri)benzenesulfonic acid and cobalt. The polypeptide is 2,3,4,5-tetrahydropyridine-2,6-dicarboxylate N-succinyltransferase (dapD) (Unknown prokaryotic organism).